The chain runs to 946 residues: Histone-lysine N-methyltransferase, H3 lysine-79 specific (946 aa).

Basic and acidic residues predominate over residues methionine 1–glutamate 18. The segment at methionine 1 to glutamate 28 is disordered. The DOT1 domain occupies glutamine 54–arginine 369. Residues tyrosine 173 to threonine 176, phenylalanine 196 to glutamine 205, glutamate 223, and aspartate 259 to phenylalanine 260 each bind S-adenosyl-L-methionine. Residues glutamine 368–lysine 409 are compositionally biased toward basic and acidic residues. Disordered regions lie at residues glutamine 368 to glycine 577 and proline 849 to glutamate 905. A compositionally biased stretch (polar residues) spans threonine 410–lysine 422. Positions glycine 464–valine 484 are enriched in basic and acidic residues. 3 stretches are compositionally biased toward low complexity: residues lysine 491–proline 502, asparagine 512–alanine 528, and serine 855–serine 864. Over residues glycine 880 to alanine 903 the composition is skewed to gly residues.

Belongs to the class I-like SAM-binding methyltransferase superfamily. DOT1 family. In terms of assembly, interacts with zfp-1 (via C-terminus) to form a heterodimer known as the zfp-1-dot-1.1 complex or DotCom complex.

It is found in the nucleus. The protein localises to the chromosome. The enzyme catalyses L-lysyl(79)-[histone H3] + 3 S-adenosyl-L-methionine = N(6),N(6),N(6)-trimethyl-L-lysyl(79)-[histone H3] + 3 S-adenosyl-L-homocysteine + 3 H(+). Its function is as follows. Histone methyltransferase, which in complex with zfp-1, methylates 'Lys-79' of histone H3 to activate transcription. During stress, the zfp-1-dot-1.1 complex also plays a role in the deubiquitination of histone H2B sites, which negatively modulates the RNA polymerase II-induced transcription of highly expressed genes. Involved in controlling tissue-specific gene expression, particularly in the epidermis. This chain is Histone-lysine N-methyltransferase, H3 lysine-79 specific, found in Caenorhabditis elegans.